The sequence spans 602 residues: MDTSSKENIQLFCKTSVQPVGRPSFKTEYPSSEEKQPCCGELKVFLGALSFVYFAKALAEGYLKSTITQIERRFDIPSSLVGVIDGSFEIGNLLVITFVSYFGAKLHRPKIIGAGCLIMGVGTLLIAMPQFFMEQYKYEIYSPSSNSTLSISPCLLESSSQLPVSVMEKSKSKISLLAAVPFWYLPKSLPRSQSREDSNSSSEKSKFIRDDHTDYQTPQGENVKIMEMARDFLPSLKYLFGNPVYFLYLCTSTVQFNSLFGMVTYKPKYIEQQYGQSSSRANFVIGLINIPAVALGIFSGGIAMKKFRISVCGAAKLYLGSSVFGYLLFLSLFALGCENSDVAGLTVSYQGTKPVSYHERALFSDCNPRCKCSETKWEPMCGENGITYVSACPAGCQTSNRSGKNIIFYNCTCVGIAASKSGNSSGIVGRCQKDNGCPQMFLYFLVISVITSYTLSLGGIPGYILLLRCIKPQLKSFALGIYTLSIRVLAGIPAPVYFGVLIDTSCLKWGFKRCGSRGSCRLYDSNVFRHIYLGLTVILGTVSIFLSIAVLFILKKNYVSKHRNFITKRERTMVSTRFQKENCTTSDHLLQPKYWPGKETQL.

The Cytoplasmic segment spans residues M1–K43. The chain crosses the membrane as a helical span at residues V44–L63. Over K64 to G82 the chain is Extracellular. A helical membrane pass occupies residues V83 to G103. The Cytoplasmic portion of the chain corresponds to A104 to P109. The helical transmembrane segment at K110–E134 threads the bilayer. At Q135–E139 the chain is on the extracellular side. The chain crosses the membrane as a helical span at residues I140–L156. Residues E157–Y238 lie on the Cytoplasmic side of the membrane. The segment at P190–Q216 is disordered. Positions Q193–D214 are enriched in basic and acidic residues. A helical transmembrane segment spans residues L239–F260. At G261–R280 the chain is on the extracellular side. The chain crosses the membrane as a helical span at residues A281 to M304. Residues K305 to R308 are Cytoplasmic-facing. The helical transmembrane segment at I309–L332 threads the bilayer. The Extracellular segment spans residues F333–F444. The 56-residue stretch at R360 to G415 folds into the Kazal-like domain. 3 disulfides stabilise this stretch: C366–C396, C372–C392, and C381–C413. N400, N410, and N423 each carry an N-linked (GlcNAc...) asparagine glycan. Residues L445–L467 traverse the membrane as a helical segment. Residues R468–S476 are Cytoplasmic-facing. The helical transmembrane segment at F477–I502 threads the bilayer. The Extracellular portion of the chain corresponds to D503–T536. Residues V537–L554 traverse the membrane as a helical segment. Residues K555 to L602 lie on the Cytoplasmic side of the membrane.

The protein belongs to the organo anion transporter (TC 2.A.60) family.

Its subcellular location is the cell membrane. The catalysed reaction is 3,3',5'-triiodo-L-thyronine(out) = 3,3',5'-triiodo-L-thyronine(in). It carries out the reaction L-thyroxine(out) = L-thyroxine(in). The enzyme catalyses L-thyroxine sulfate(out) = L-thyroxine sulfate(in). Its function is as follows. Mediates the Na(+)-independent high affinity transport of organic anions such as the thyroid hormones L-thyroxine (T4), L-thyroxine sulfate (T4S), and 3,3',5'-triiodo-L-thyronine (reverse T3, rT3) at the plasma membrane. Regulates T4 levels in different brain regions by transporting T4, and also by serving as an export pump for T4S, which is a source of T4 after hydrolysis by local sulfatases. Increases the access of these substrates to the intracellular sites where they are metabolized by the deiodinases. Other potential substrates, such as triiodothyronine (T3), 17-beta-glucuronosyl estradiol (17beta-estradiol 17-O-(beta-D-glucuronate)), estrone-3-sulfate (E1S) and sulfobromophthalein (BSP) are transported with much lower efficiency. Transports T4 and E1S in a pH-insensitive manner. Facilitates the transport of thyroid hormones across the blood-brain barrier and into glia and neuronal cells in the brain. The protein is Solute carrier organic anion transporter family member 1C1 (SLCO1C1) of Macaca fascicularis (Crab-eating macaque).